The primary structure comprises 664 residues: MIDFFLKSEYLPAGDQPKAIKEIENSILLGNKYQTLKGVTGSGKTFTIANIIKNLNRPALVVSHNKTLAAQLYREFKDFFPNNAVEYFVSYYDYYQPESYVPSKDLFIEKEATINSEIEIKRIRTVTSLAKRRDVIVVATVSSIYALGSPDFFKKSAREFFVGQRISIKEISDIFVELYYERTLINLERDKFSIKGDIIEIWPSSEHGEFAYRICLDFDEIVKIYRISSFSKKNLGATNSFTLFAKSYFVIPYQNVLEAIPKISYDLDLQCQYFKDNGKLVEAERLKQRVEYDLEMLRETGFCSGIENYSKYLSGSTMGRPYCLFDFFPKDYLLFVDESHVTLPQFRGMYNGDYSRKLNLVNFGFRLPAALENRPLKYDEFDALINQVVFVSATPGFEENEKSSVTVDQIIRPTGLVDPEIITRHSDGQMEDLYIEIQKRVALKERVLITTLTKKMSEDLTEYLVTLGVKAKYLHSELDTLERVEVISLLRKSEIDVIVGINLLREGLDIPEVSLVAILDADKVGFLRSATSLIQTIGRAARNSNGLVIMYYDKISVAMREAIEETNRRRQIQIDYNKKNNITPKTIVKKIQNILEKELNNKNKNISYDFEKMVSGEKLSKKKLIDKLKFELEEAVNDERFEDAIVLRDKIKELGSKISVARNK.

In terms of domain architecture, Helicase ATP-binding spans 25 to 170; that stretch reads NSILLGNKYQ…FVGQRISIKE (146 aa). 38 to 45 is an ATP binding site; the sequence is GVTGSGKT. Positions 91 to 114 match the Beta-hairpin motif; it reads YYDYYQPESYVPSKDLFIEKEATI. In terms of domain architecture, Helicase C-terminal spans 429 to 595; sequence QMEDLYIEIQ…TIVKKIQNIL (167 aa). Residues 622-657 enclose the UVR domain; that stretch reads KKLIDKLKFELEEAVNDERFEDAIVLRDKIKELGSK.

The protein belongs to the UvrB family. As to quaternary structure, forms a heterotetramer with UvrA during the search for lesions. Interacts with UvrC in an incision complex.

The protein localises to the cytoplasm. Its function is as follows. The UvrABC repair system catalyzes the recognition and processing of DNA lesions. A damage recognition complex composed of 2 UvrA and 2 UvrB subunits scans DNA for abnormalities. Upon binding of the UvrA(2)B(2) complex to a putative damaged site, the DNA wraps around one UvrB monomer. DNA wrap is dependent on ATP binding by UvrB and probably causes local melting of the DNA helix, facilitating insertion of UvrB beta-hairpin between the DNA strands. Then UvrB probes one DNA strand for the presence of a lesion. If a lesion is found the UvrA subunits dissociate and the UvrB-DNA preincision complex is formed. This complex is subsequently bound by UvrC and the second UvrB is released. If no lesion is found, the DNA wraps around the other UvrB subunit that will check the other stand for damage. The sequence is that of UvrABC system protein B from Borreliella afzelii (strain PKo) (Borrelia afzelii).